A 343-amino-acid polypeptide reads, in one-letter code: Tryptophan--tRNA ligase (343 aa).

ATP contacts are provided by residues 15–17 (QPT) and 24–25 (GN). The 'HIGH' region motif lies at 16–25 (PTSDSLHLGN). Asp145 serves as a coordination point for L-tryptophan. ATP-binding positions include 157–159 (GED), Ile196, and 205–209 (KMSKS). The short motif at 205-209 (KMSKS) is the 'KMSKS' region element.

Belongs to the class-I aminoacyl-tRNA synthetase family. As to quaternary structure, homodimer.

It localises to the cytoplasm. The catalysed reaction is tRNA(Trp) + L-tryptophan + ATP = L-tryptophyl-tRNA(Trp) + AMP + diphosphate + H(+). Functionally, catalyzes the attachment of tryptophan to tRNA(Trp). This Mycobacterium leprae (strain TN) protein is Tryptophan--tRNA ligase.